A 291-amino-acid polypeptide reads, in one-letter code: 4-hydroxy-tetrahydrodipicolinate synthase (291 aa).

A pyruvate-binding site is contributed by Thr47. Tyr134 (proton donor/acceptor) is an active-site residue. Catalysis depends on Lys162, which acts as the Schiff-base intermediate with substrate. Ile205 lines the pyruvate pocket.

This sequence belongs to the DapA family. Homotetramer; dimer of dimers.

Its subcellular location is the cytoplasm. It carries out the reaction L-aspartate 4-semialdehyde + pyruvate = (2S,4S)-4-hydroxy-2,3,4,5-tetrahydrodipicolinate + H2O + H(+). The protein operates within amino-acid biosynthesis; L-lysine biosynthesis via DAP pathway; (S)-tetrahydrodipicolinate from L-aspartate: step 3/4. Catalyzes the condensation of (S)-aspartate-beta-semialdehyde [(S)-ASA] and pyruvate to 4-hydroxy-tetrahydrodipicolinate (HTPA). The protein is 4-hydroxy-tetrahydrodipicolinate synthase of Methanoculleus marisnigri (strain ATCC 35101 / DSM 1498 / JR1).